Consider the following 296-residue polypeptide: Phosphatidylglycerol--prolipoprotein diacylglyceryl transferase (296 aa).

The next 7 membrane-spanning stretches (helical) occupy residues 17-37 (LAVRWYGLMYLVGFIAAIVVG), 59-79 (MMFYGVLGTVLGGRLGYVLFY), 97-117 (GGMSFHGGFLGVTLAMMLFAW), 129-149 (FVAPMVPLGLAAGRLGNFING), 204-224 (SQLYEIALEGIALFFVLFLFA), 230-250 (MGAISALFLIGYGLARFTVEF), and 257-277 (FLGLLALGLSMGQWLSLPMIL). Position 142 (arginine 142) interacts with a 1,2-diacyl-sn-glycero-3-phospho-(1'-sn-glycerol).

It belongs to the Lgt family.

The protein localises to the cell inner membrane. It catalyses the reaction L-cysteinyl-[prolipoprotein] + a 1,2-diacyl-sn-glycero-3-phospho-(1'-sn-glycerol) = an S-1,2-diacyl-sn-glyceryl-L-cysteinyl-[prolipoprotein] + sn-glycerol 1-phosphate + H(+). It participates in protein modification; lipoprotein biosynthesis (diacylglyceryl transfer). In terms of biological role, catalyzes the transfer of the diacylglyceryl group from phosphatidylglycerol to the sulfhydryl group of the N-terminal cysteine of a prolipoprotein, the first step in the formation of mature lipoproteins. This Burkholderia cenocepacia (strain HI2424) protein is Phosphatidylglycerol--prolipoprotein diacylglyceryl transferase.